The following is a 599-amino-acid chain: Flap endonuclease GEN-like 1 (599 aa).

The N-domain stretch occupies residues 1 to 96 (MGVGGNFWDL…ISRFFRSSGI (96 aa)). Residues 2 to 95 (GVGGNFWDLL…RISRFFRSSG (94 aa)) form an XPG-N domain region. Mg(2+) is bound by residues D31, D75, E140, E142, D161, D163, and D213. The interval 128-213 (ELLGIPVLKA…IAISLLVGND (86 aa)) is XPG-I domain. The I-domain stretch occupies residues 128–217 (ELLGIPVLKA…LLVGNDYDSG (90 aa)). Positions 213–407 (DYDSGGVLGI…LLPMLSTIYL (195 aa)) are 5'-3' exonuclease domain. Disordered stretches follow at residues 522–545 (RESK…MGVQ) and 559–599 (AAGQ…LLFG). Polar residues-rich tracts occupy residues 563 to 572 (SIETGGSSKA) and 580 to 590 (ATSTSSSNLTK).

It belongs to the XPG/RAD2 endonuclease family. GEN subfamily. It depends on Mg(2+) as a cofactor.

The protein resides in the nucleus. In terms of biological role, endonuclease which cleaves flap structures at the junction between single-stranded DNA and double-stranded DNA with a specific cleavage site in the 5' overhang strand exactly one nucleotide 3' of the branch point. Structure- and sequence-specific nuclease that resolves holliday junctions (HJs) by symmetrically oriented incisions in two opposing strands near the junction point, thus leading to ligatable products; HJs are physical links between homologous DNA molecules that arise as central intermediary structures during homologous recombination and repair in meiotic and somatic cells. Structure-specific nuclease with 5'-flap endonuclease activity, preferentially cleaving static flaps 5' overhang strand exactly one nucleotide in the 3' direction of the branch point. Also able to cleave double-stranded flap strand 1 exactly at the branch point. This Arabidopsis thaliana (Mouse-ear cress) protein is Flap endonuclease GEN-like 1.